The following is a 535-amino-acid chain: Flavin-containing monooxygenase 2 (535 aa).

Ala-2 is subject to N-acetylalanine. FAD contacts are provided by residues 9–13, Glu-32, 40–41, and 61–62; these read GAGVS, VW, and NT. NADP(+) is bound by residues 60-61 and 195-198; these read TN and SGSD. Residue Lys-492 forms a Glycyl lysine isopeptide (Lys-Gly) (interchain with G-Cter in SUMO) linkage. A helical transmembrane segment spans residues 510–530; the sequence is FSVSFLLKILGLLAVVVAFFC.

The protein belongs to the FMO family. It depends on FAD as a cofactor. Requires Mg(2+) as cofactor. Expressed in lung (at protein level). Expressed predominantly in lung, and at a much lesser extent in kidney. Also expressed in fetal lung, but not in liver, kidney and brain.

It is found in the microsome membrane. The protein localises to the endoplasmic reticulum membrane. In terms of biological role, catalyzes the oxidative metabolism of numerous xenobiotics, including mainly therapeutic drugs and insecticides that contain a soft nucleophile, most commonly nitrogen and sulfur and participates to their bioactivation. Specifically catalyzes S-oxygenation of sulfur derived compounds such as thioureas-derived compounds, thioetherorganophosphates to their sulfenic acid. In vitro, catalyzes S-oxygenation of the second-line antitubercular drugs thiacetazone (TAZ) and ethionamide (ETA), forming a sulfinic acid and a carbodiimide via a postulated sulfenic acid intermediate. Also catalyzes S-oxygenation of the thioether-containing organophosphate insecticides, phorate and disulfoton. The chain is Flavin-containing monooxygenase 2 from Homo sapiens (Human).